A 424-amino-acid chain; its full sequence is Histidine--tRNA ligase (424 aa).

This sequence belongs to the class-II aminoacyl-tRNA synthetase family. Homodimer.

It localises to the cytoplasm. The catalysed reaction is tRNA(His) + L-histidine + ATP = L-histidyl-tRNA(His) + AMP + diphosphate + H(+). This is Histidine--tRNA ligase from Salmonella arizonae (strain ATCC BAA-731 / CDC346-86 / RSK2980).